The following is a 95-amino-acid chain: UPF0132 membrane protein AF_0736 (95 aa).

Helical transmembrane passes span 2–22 (CYTLGFVTGVLFLLFDRSPFV), 32–52 (TFSTITALVILLPVLPGGALL), and 55–75 (VVMAFSIILWAFCIVKASRGE).

This sequence belongs to the UPF0132 family.

The protein localises to the cell membrane. The protein is UPF0132 membrane protein AF_0736 of Archaeoglobus fulgidus (strain ATCC 49558 / DSM 4304 / JCM 9628 / NBRC 100126 / VC-16).